The following is a 448-amino-acid chain: Trigger factor (448 aa).

Positions 172–257 (GDRVTVDFVG…MKKIEWPHLP (86 aa)) constitute a PPIase FKBP-type domain.

It belongs to the FKBP-type PPIase family. Tig subfamily.

It localises to the cytoplasm. The enzyme catalyses [protein]-peptidylproline (omega=180) = [protein]-peptidylproline (omega=0). In terms of biological role, involved in protein export. Acts as a chaperone by maintaining the newly synthesized protein in an open conformation. Functions as a peptidyl-prolyl cis-trans isomerase. This is Trigger factor from Burkholderia lata (strain ATCC 17760 / DSM 23089 / LMG 22485 / NCIMB 9086 / R18194 / 383).